The following is a 182-amino-acid chain: MRILGIDPGLQIAGFGVVEVDGPHLHYVASGTIKTTHMVRGDLPARLKVLFDGVREVVQRYQPDMASVEIVFTNVNPQATLLLGQARGACITALVSSDLTVAEYTALQMKKAVAGYGKAGKAEVQQMVMRLLKLPALPGKDAADALGLAITHAHAGRSTAILAAATALKPNASASYKAGRHY.

Active-site residues include Asp7, Glu69, and Asp141. 3 residues coordinate Mg(2+): Asp7, Glu69, and Asp141.

The protein belongs to the RuvC family. In terms of assembly, homodimer which binds Holliday junction (HJ) DNA. The HJ becomes 2-fold symmetrical on binding to RuvC with unstacked arms; it has a different conformation from HJ DNA in complex with RuvA. In the full resolvosome a probable DNA-RuvA(4)-RuvB(12)-RuvC(2) complex forms which resolves the HJ. Requires Mg(2+) as cofactor.

The protein resides in the cytoplasm. The catalysed reaction is Endonucleolytic cleavage at a junction such as a reciprocal single-stranded crossover between two homologous DNA duplexes (Holliday junction).. Its function is as follows. The RuvA-RuvB-RuvC complex processes Holliday junction (HJ) DNA during genetic recombination and DNA repair. Endonuclease that resolves HJ intermediates. Cleaves cruciform DNA by making single-stranded nicks across the HJ at symmetrical positions within the homologous arms, yielding a 5'-phosphate and a 3'-hydroxyl group; requires a central core of homology in the junction. The consensus cleavage sequence is 5'-(A/T)TT(C/G)-3'. Cleavage occurs on the 3'-side of the TT dinucleotide at the point of strand exchange. HJ branch migration catalyzed by RuvA-RuvB allows RuvC to scan DNA until it finds its consensus sequence, where it cleaves and resolves the cruciform DNA. This is Crossover junction endodeoxyribonuclease RuvC from Polaromonas sp. (strain JS666 / ATCC BAA-500).